A 589-amino-acid chain; its full sequence is MASKAMPRAPPAAPNLQSLKLCSQNDSSLETTSPSKRSALVPGRSAESSKPNSEVVQKEQKSTQHQNESIDLTGSNDPAEVKAEGNLVPKRLADEEKGVVEDGIANGSLKSSSALGKEHGIASASGSARLVGRSETGERGFSSSRCRPSTSSDVSDESACSSISSVTKPHKANDSRWEAIQMIRTRDGILGLSHFKLLKKLGCGDIGSVYLSELNGTKSYFAMKVMDKASLASRKKLLRAQTEKEILQCLDHPFLPTLYTHFETDKFSCLVMEFCPGGDLHTLRQRQRGKYFPEQAVKFYVAEILLAMEYLHMLGIIYRDLKPENVLVREDGHIMLSDFDLSLRCAVSPTLIRSSNPDAEALRKNNQAYCVQPACVEPSCMIQPSCATPTTCFGPRFFSKSKKDRKPKPEVVNQVSPWPELIAEPSDARSMSFVGTHEYLAPEIIKGEGHGSAVDWWTFGIFLYELLFGKTPFKGSGNRATLFNVIGQPLRFPEYPVVSFSARDLIRGLLVKEPQQRLGCKRGATEIKQHPFFEGVNWALIRCASPPEVPRPVEIERPPKQPVSTSEPAAAPSDAAQKSSDSYLEFDFF.

Residues 1–167 (MASKAMPRAP…SACSSISSVT (167 aa)) form a disordered region. 3 stretches are compositionally biased toward polar residues: residues 15-36 (NLQS…SPSK), 46-55 (AESSKPNSEV), and 63-76 (TQHQ…TGSN). A compositionally biased stretch (basic and acidic residues) spans 91 to 100 (RLADEEKGVV). Positions 142 to 165 (SSSRCRPSTSSDVSDESACSSISS) are enriched in low complexity. Residues 195 to 533 (FKLLKKLGCG…ATEIKQHPFF (339 aa)) enclose the Protein kinase domain. Residues 201 to 209 (LGCGDIGSV) and Lys224 contribute to the ATP site. Catalysis depends on Asp320, which acts as the Proton acceptor. Positions 551 to 589 (RPVEIERPPKQPVSTSEPAAAPSDAAQKSSDSYLEFDFF) are disordered.

It belongs to the protein kinase superfamily. Ser/Thr protein kinase family.

The catalysed reaction is L-seryl-[protein] + ATP = O-phospho-L-seryl-[protein] + ADP + H(+). It carries out the reaction L-threonyl-[protein] + ATP = O-phospho-L-threonyl-[protein] + ADP + H(+). In terms of biological role, may play a role in the regulation of metabolism and signal transduction processes. The protein is Protein kinase G11A of Oryza sativa subsp. indica (Rice).